Consider the following 269-residue polypeptide: Phosphonates import ATP-binding protein PhnC (269 aa).

The ABC transporter domain occupies 2–245 (LVVEGLTCRF…VARELYDLEA (244 aa)). 34 to 41 (GRSGAGKS) contributes to the ATP binding site.

It belongs to the ABC transporter superfamily. Phosphonates importer (TC 3.A.1.9.1) family. In terms of assembly, the complex is composed of two ATP-binding proteins (PhnC), two transmembrane proteins (PhnE) and a solute-binding protein (PhnD).

The protein localises to the cell inner membrane. The enzyme catalyses phosphonate(out) + ATP + H2O = phosphonate(in) + ADP + phosphate + H(+). Part of the ABC transporter complex PhnCDE involved in phosphonates import. Responsible for energy coupling to the transport system. In Bradyrhizobium diazoefficiens (strain JCM 10833 / BCRC 13528 / IAM 13628 / NBRC 14792 / USDA 110), this protein is Phosphonates import ATP-binding protein PhnC.